We begin with the raw amino-acid sequence, 117 residues long: Large ribosomal subunit protein bL19 (117 aa).

Belongs to the bacterial ribosomal protein bL19 family.

Functionally, this protein is located at the 30S-50S ribosomal subunit interface and may play a role in the structure and function of the aminoacyl-tRNA binding site. The chain is Large ribosomal subunit protein bL19 from Shewanella baltica (strain OS155 / ATCC BAA-1091).